The sequence spans 1357 residues: MAYSYTEKKRIRKDFSKLPDVMDVPYLLAIQLDSYREFLQAGASKDHFRDVGLHAAFKSVFPIISYSGNAALEYVGYRLGEPAFDVKECVLRGVTFAVPLRVKVRLIIFDKESSNKAIKDIKEQEVYMGEIPLMTENGTFVINGTERVIVSQLHRSPGVFFDHDRGKTHSSGKLLYSARIIPYRGSWLDFEFDPKDCVFVRIDRRRKLPASVLLRALGYSTEEVLNTFYTTNVFHISGEKLSLELVPQRLRGEVAVMDIHDETGKVIVEQGRRITARHINQLEKAGVKQLDVPMEYVLGRTTAKAIVHPATGEILAECNTEMTTELLIKVAKAQVVRIETLYTNDIDCGPFISDTLKIDTTSNQLEALVEIYRMMRPGEPPTKDAAETLFNNLFFSAERYDLSAVGRMKFNRRIGRTEIEGSGVLSKEDIVEVLKTLVDIRNGKGIVDDIDHLGNRRVRCVGEMAENQFRVGLVRVERAVKERLSMAESEGLMPQDLINAKPVAAAVKEFFGSSQLSQFMDQNNPLSEITHKRRVSALGPGGLTRERAGFEVRDVHPTHYGRVCPIETPEGPNIGLINSLAAYARTNQYGFLESPYRVVKEGVVSDDIVFLSAIEEADHVIAQASAAMNDKKQLIDELVAVRHLNEFTVKAPEDVTLMDVSPKQVVSVAASLIPFLEHDDANRALMGSNMQRQAVPTLRADKPLVGTGMERNVARDSGVCVVARRGGVIDSVDASRIVVRVADDEVETGEAGVDIYNLTKYTRSNQNTCINQRPLVSKGDKVQRGDIMADGPSTDMGELALGQNMRIAFMAWNGFNFEDSICLSERVVQEDRFTTIHIQELTCVARDTKLGPEEITADIPNVGEAALNKLDEAGIVYVGAEVGAGDILVGKVTPKGETQLTPEEKLLRAIFGEKASDVKDTSLRVPTGTKGTVIDVQVFTRDGVERDSRALAIEKMQLDEIRKDLNEEFRIVEGATFERLRSALNGQVVDGGAGLKKGTVITDEVLDGLEHGQWFKLRMAEDALNEQLEKAQQYIVDRRRLLDDKFEDKKRKLQQGDDLAPGVLKIVKVYLAIRRRIQPGDKMAGRHGNKGVVSVIMPVEDMPHDANGTPVDVVLNPLGVPSRMNVGQILETHLGLAAKGLGEKIDRMLEEQRKAAELRVFLTEVYNEIGGRQENLDEFTDEEILALANNLKKGVPMATPVFDGAKEREIKAMLKLADLPESGQMVLFDGRTGNKFERPVTVGYMYMLKLNHLVDDKMHARSTGSYSLVTQQPLGGKAQFGGQRFGEMEVWALEAYGAAYTLQEMLTVKSDDVNGRTKMYKNIVDGDHRMEPGMPESFNVLIKEIRSLGIDIDLETE.

It belongs to the RNA polymerase beta chain family. As to quaternary structure, the RNAP catalytic core consists of 2 alpha, 1 beta, 1 beta' and 1 omega subunit. When a sigma factor is associated with the core the holoenzyme is formed, which can initiate transcription.

It catalyses the reaction RNA(n) + a ribonucleoside 5'-triphosphate = RNA(n+1) + diphosphate. In terms of biological role, DNA-dependent RNA polymerase catalyzes the transcription of DNA into RNA using the four ribonucleoside triphosphates as substrates. This is DNA-directed RNA polymerase subunit beta from Pseudomonas putida (strain ATCC 700007 / DSM 6899 / JCM 31910 / BCRC 17059 / LMG 24140 / F1).